The chain runs to 508 residues: Photosystem II CP47 reaction center protein (508 aa).

6 consecutive transmembrane segments (helical) span residues 21–36, 101–115, 140–156, 203–218, 237–252, and 457–472; these read SVHI…WAGS, IVFS…IWHW, GIHL…FGAF, IAAG…FHLS, VLSS…AFVV, and SFAL…HGAR.

This sequence belongs to the PsbB/PsbC family. PsbB subfamily. PSII is composed of 1 copy each of membrane proteins PsbA, PsbB, PsbC, PsbD, PsbE, PsbF, PsbH, PsbI, PsbJ, PsbK, PsbL, PsbM, PsbT, PsbX, PsbY, PsbZ, Psb30/Ycf12, at least 3 peripheral proteins of the oxygen-evolving complex and a large number of cofactors. It forms dimeric complexes. The cofactor is Binds multiple chlorophylls. PSII binds additional chlorophylls, carotenoids and specific lipids..

The protein resides in the plastid. The protein localises to the chloroplast thylakoid membrane. In terms of biological role, one of the components of the core complex of photosystem II (PSII). It binds chlorophyll and helps catalyze the primary light-induced photochemical processes of PSII. PSII is a light-driven water:plastoquinone oxidoreductase, using light energy to abstract electrons from H(2)O, generating O(2) and a proton gradient subsequently used for ATP formation. This chain is Photosystem II CP47 reaction center protein, found in Dioscorea elephantipes (Elephant's foot yam).